The sequence spans 241 residues: Transcriptional regulatory protein SrrA (241 aa).

The Response regulatory domain occupies E4–L117. D53 is modified (4-aspartylphosphate). The segment at residues R133–V233 is a DNA-binding region (ompR/PhoB-type).

Post-translationally, phosphorylated by SrrB.

The protein localises to the cytoplasm. Its function is as follows. Member of the two-component regulatory system SrrA/SrrB, which is involved in the global regulation of staphylococcal virulence factors in response to environmental oxygen levels as well as biofilm formation. Also plays an essential role in host-derived nitric oxide resistance by regulating hmp/flavohemoglobin, an enzyme that detoxifies nitric oxide by converting it to nitrate. Functions as a transcription regulator by direct binding to promoter regions of target genes. This is Transcriptional regulatory protein SrrA (srrA) from Staphylococcus aureus (strain NCTC 8325 / PS 47).